A 71-amino-acid chain; its full sequence is Biotinylated protein TB7.3 (71 aa).

A Biotinyl-binding domain is found at 2–71; the sequence is AEDVRAEIVA…QAGDLIAVIS (70 aa). Lysine 37 carries the post-translational modification N6-biotinyllysine.

This Mycobacterium bovis (strain ATCC BAA-935 / AF2122/97) protein is Biotinylated protein TB7.3.